Reading from the N-terminus, the 520-residue chain is Cholesterol side-chain cleavage enzyme, mitochondrial (520 aa).

The N-terminal 39 residues, M1–G39, are a transit peptide targeting the mitochondrion. C461 contacts heme.

The protein belongs to the cytochrome P450 family. Interacts with FDX1/adrenodoxin. The cofactor is heme. As to expression, detected in adrenal cortex and corpus luteum (at protein level).

The protein localises to the mitochondrion inner membrane. The catalysed reaction is 6 reduced [adrenodoxin] + cholesterol + 3 O2 + 6 H(+) = 4-methylpentanal + pregnenolone + 6 oxidized [adrenodoxin] + 4 H2O. It carries out the reaction 2 reduced [adrenodoxin] + cholesterol + O2 + 2 H(+) = (22R)-hydroxycholesterol + 2 oxidized [adrenodoxin] + H2O. The enzyme catalyses (22R)-hydroxycholesterol + 2 reduced [adrenodoxin] + O2 + 2 H(+) = (20R,22R)-20,22-dihydroxycholesterol + 2 oxidized [adrenodoxin] + H2O. It catalyses the reaction (20R,22R)-20,22-dihydroxycholesterol + 2 reduced [adrenodoxin] + O2 + 2 H(+) = 4-methylpentanal + pregnenolone + 2 oxidized [adrenodoxin] + 2 H2O. It participates in lipid metabolism; C21-steroid hormone metabolism. Its pathway is steroid metabolism; cholesterol metabolism. A cytochrome P450 monooxygenase that catalyzes the side-chain hydroxylation and cleavage of cholesterol to pregnenolone, the precursor of most steroid hormones. Catalyzes three sequential oxidation reactions of cholesterol, namely the hydroxylation at C22 followed with the hydroxylation at C20 to yield 20R,22R-hydroxycholesterol that is further cleaved between C20 and C22 to yield the C21-steroid pregnenolone and 4-methylpentanal. Mechanistically, uses molecular oxygen inserting one oxygen atom into a substrate and reducing the second into a water molecule. Two electrons are provided by NADPH via a two-protein mitochondrial transfer system comprising flavoprotein FDXR (adrenodoxin/ferredoxin reductase) and nonheme iron-sulfur protein FDX1 or FDX2 (adrenodoxin/ferredoxin). This is Cholesterol side-chain cleavage enzyme, mitochondrial (CYP11A1) from Bos taurus (Bovine).